A 398-amino-acid polypeptide reads, in one-letter code: Acetyl-CoA acetyltransferase (398 aa).

Position 2 is an N-acetylserine (Ser2). The active-site Acyl-thioester intermediate is Cys91. CoA contacts are provided by Tyr186 and Lys231. A K(+)-binding site is contributed by Tyr186. K(+) contacts are provided by Ala248, Ala249, and Ala251. Ser252 is a binding site for CoA. Val350 lines the K(+) pocket. Catalysis depends on proton acceptor residues His354 and Cys384.

This sequence belongs to the thiolase-like superfamily. Thiolase family. Homotetramer.

Its subcellular location is the cytoplasm. The catalysed reaction is 2 acetyl-CoA = acetoacetyl-CoA + CoA. It functions in the pathway metabolic intermediate biosynthesis; (R)-mevalonate biosynthesis; (R)-mevalonate from acetyl-CoA: step 1/3. Its function is as follows. Acetyl-CoA acetyltransferase; part of the first module of ergosterol biosynthesis pathway that includes the early steps of the pathway, conserved across all eukaryotes, and which results in the formation of mevalonate from acetyl-coenzyme A (acetyl-CoA). In this module, the acetyl-CoA acetyltransferase ERG10 catalyzes the formation of acetoacetyl-CoA. The hydroxymethylglutaryl-CoA synthase ERG13 then condenses acetyl-CoA with acetoacetyl-CoA to form HMG-CoA. The rate-limiting step of the early module is the reduction to mevalonate by the 3-hydroxy-3-methylglutaryl-coenzyme A (HMG-CoA) reductases HMG1 and HMG2 which are derived from a single ancestral HMGR gene by gene duplication. This is Acetyl-CoA acetyltransferase from Saccharomyces pastorianus (strain ATCC 76670 / Carlsberg bottom yeast no.2 / CBS 1503 / CLIB 180 / NBRC 10610 / NRRL Y-1525) (Saaz-type lager yeast).